The sequence spans 409 residues: Glucose-1-phosphate adenylyltransferase (409 aa).

Alpha-D-glucose 1-phosphate-binding positions include glycine 168, 183–184 (EK), and serine 201.

Belongs to the bacterial/plant glucose-1-phosphate adenylyltransferase family. Homotetramer.

The catalysed reaction is alpha-D-glucose 1-phosphate + ATP + H(+) = ADP-alpha-D-glucose + diphosphate. It functions in the pathway glycan biosynthesis; glycogen biosynthesis. In terms of biological role, involved in the biosynthesis of ADP-glucose, a building block required for the elongation reactions to produce glycogen. Catalyzes the reaction between ATP and alpha-D-glucose 1-phosphate (G1P) to produce pyrophosphate and ADP-Glc. The sequence is that of Glucose-1-phosphate adenylyltransferase from Corynebacterium glutamicum (strain R).